The chain runs to 105 residues: UPF0145 protein Sala_0338 (105 aa).

The protein belongs to the UPF0145 family.

The polypeptide is UPF0145 protein Sala_0338 (Sphingopyxis alaskensis (strain DSM 13593 / LMG 18877 / RB2256) (Sphingomonas alaskensis)).